The sequence spans 166 residues: Interferon gamma (166 aa).

An N-terminal signal peptide occupies residues 1–23; that stretch reads MNYTSYILAFQLCVILGSSGCYC. Q24 is subject to Pyrrolidone carboxylic acid. N-linked (GlcNAc...) asparagine glycosylation is found at N39 and N106. Residues 147 to 166 form a disordered region; the sequence is SNLRKRKRRQNQIQGRRASK.

The protein belongs to the type II (or gamma) interferon family. As to quaternary structure, homodimer. Interacts with IFNGR1 (via extracellular domain); this interaction promotes IFNGR1 dimerization. As to expression, released primarily from activated T lymphocytes.

It is found in the secreted. Its function is as follows. Type II interferon produced by immune cells such as T-cells and NK cells that plays crucial roles in antimicrobial, antiviral, and antitumor responses by activating effector immune cells and enhancing antigen presentation. Primarily signals through the JAK-STAT pathway after interaction with its receptor IFNGR1 to affect gene regulation. Upon IFNG binding, IFNGR1 intracellular domain opens out to allow association of downstream signaling components JAK2, JAK1 and STAT1, leading to STAT1 activation, nuclear translocation and transcription of IFNG-regulated genes. Many of the induced genes are transcription factors such as IRF1 that are able to further drive regulation of a next wave of transcription. Plays a role in class I antigen presentation pathway by inducing a replacement of catalytic proteasome subunits with immunoproteasome subunits. In turn, increases the quantity, quality, and repertoire of peptides for class I MHC loading. Increases the efficiency of peptide generation also by inducing the expression of activator PA28 that associates with the proteasome and alters its proteolytic cleavage preference. Up-regulates as well MHC II complexes on the cell surface by promoting expression of several key molecules such as cathepsins B/CTSB, H/CTSH, and L/CTSL. Participates in the regulation of hematopoietic stem cells during development and under homeostatic conditions by affecting their development, quiescence, and differentiation. This is Interferon gamma (IFNG) from Lama glama (Llama).